Here is a 395-residue protein sequence, read N- to C-terminus: Small ribosomal subunit protein mS31 (395 aa).

A mitochondrion-targeting transit peptide spans 1 to 65 (MFPRVSTFLP…IQRYFGTNSV (65 aa)). Disordered stretches follow at residues 70-97 (KDKQ…NTKK) and 175-196 (SELL…DAKR). Basic and acidic residues predominate over residues 183–196 (QHEEESRAQRDAKR).

It belongs to the mitochondrion-specific ribosomal protein mS31 family. As to quaternary structure, component of the mitochondrial small ribosomal subunit (mt-SSU). Mature mammalian 55S mitochondrial ribosomes consist of a small (28S) and a large (39S) subunit. The 28S small subunit contains a 12S ribosomal RNA (12S mt-rRNA) and 30 different proteins. The 39S large subunit contains a 16S rRNA (16S mt-rRNA), a copy of mitochondrial valine transfer RNA (mt-tRNA(Val)), which plays an integral structural role, and 52 different proteins.

The protein localises to the mitochondrion. In Homo sapiens (Human), this protein is Small ribosomal subunit protein mS31 (MRPS31).